The primary structure comprises 475 residues: Fez family zinc finger protein 1 (475 aa).

Residues 28-43 (PLAFSIERIMARTPEP) carry the Engrailed homology 1 repressor motif. 6 C2H2-type zinc fingers span residues 260-282 (FTCE…MPVH), 288-310 (FVCK…KIIH), 316-338 (HKCN…TRIH), 344-366 (FVCE…KLTH), 372-394 (FKCN…MHTH), and 400-423 (FTCP…RKLH). The interval 425–475 (SSLGLTRTPTGEPSSDPPPQLQQPPPAPLPPLQPTLPPPGPLPSGLHQGHQ) is disordered. Over residues 427–437 (LGLTRTPTGEP) the composition is skewed to polar residues. The span at 439-466 (SDPPPQLQQPPPAPLPPLQPTLPPPGPL) shows a compositional bias: pro residues.

It belongs to the krueppel C2H2-type zinc-finger protein family.

The protein localises to the nucleus. Functionally, transcription repressor. Involved in the axonal projection and proper termination of olfactory sensory neurons (OSN). Plays a role in rostro-caudal patterning of the diencephalon and in prethalamic formation. Expression is required in OSN to cell-autonomously regulate OSN axon projections. Regulates non-cell-autonomously the layer formation of the olfactory bulb development and the interneurons. May be required for correct rostral migration of the interneuron progenitors. The chain is Fez family zinc finger protein 1 (Fezf1) from Mus musculus (Mouse).